Here is a 259-residue protein sequence, read N- to C-terminus: Ribosome maturation factor RimP (259 aa).

Residues 198–259 (SLGLAPEPPP…RGEIDTSEGD (62 aa)) form a disordered region. The span at 243–253 (LAADKARRGEI) shows a compositional bias: basic and acidic residues.

The protein belongs to the RimP family.

It is found in the cytoplasm. Its function is as follows. Required for maturation of 30S ribosomal subunits. The protein is Ribosome maturation factor RimP of Rhodopseudomonas palustris (strain TIE-1).